The primary structure comprises 200 residues: Holliday junction branch migration complex subunit RuvA (200 aa).

Positions 1–64 (MIAHLTGLVG…EDAFLLYGFA (64 aa)) are domain I. The domain II stretch occupies residues 65 to 143 (EAAERDWFRL…RMPAGPGVTI (79 aa)). Residues 144-147 (AAPP) are flexible linker. Positions 148–200 (ASGGVEADALLALAGLGFRRAEAQPVVGRILARLDGKADLDVVIRESLRELAR) are domain III.

This sequence belongs to the RuvA family. As to quaternary structure, homotetramer. Forms an RuvA(8)-RuvB(12)-Holliday junction (HJ) complex. HJ DNA is sandwiched between 2 RuvA tetramers; dsDNA enters through RuvA and exits via RuvB. An RuvB hexamer assembles on each DNA strand where it exits the tetramer. Each RuvB hexamer is contacted by two RuvA subunits (via domain III) on 2 adjacent RuvB subunits; this complex drives branch migration. In the full resolvosome a probable DNA-RuvA(4)-RuvB(12)-RuvC(2) complex forms which resolves the HJ.

The protein localises to the cytoplasm. In terms of biological role, the RuvA-RuvB-RuvC complex processes Holliday junction (HJ) DNA during genetic recombination and DNA repair, while the RuvA-RuvB complex plays an important role in the rescue of blocked DNA replication forks via replication fork reversal (RFR). RuvA specifically binds to HJ cruciform DNA, conferring on it an open structure. The RuvB hexamer acts as an ATP-dependent pump, pulling dsDNA into and through the RuvAB complex. HJ branch migration allows RuvC to scan DNA until it finds its consensus sequence, where it cleaves and resolves the cruciform DNA. The polypeptide is Holliday junction branch migration complex subunit RuvA (Gluconacetobacter diazotrophicus (strain ATCC 49037 / DSM 5601 / CCUG 37298 / CIP 103539 / LMG 7603 / PAl5)).